The chain runs to 458 residues: tRNA modification GTPase MnmE (458 aa).

The (6S)-5-formyl-5,6,7,8-tetrahydrofolate site is built by arginine 22, glutamate 84, and arginine 123. The TrmE-type G domain occupies 220–379 (GIATAIIGRP…LEKAIADLFF (160 aa)). Position 230 (asparagine 230) interacts with K(+). GTP is bound by residues 230 to 235 (NVGKSS), 249 to 255 (TDIAGTT), and 274 to 277 (DTAG). Residue serine 234 coordinates Mg(2+). Residues threonine 249, isoleucine 251, and threonine 254 each contribute to the K(+) site. Position 255 (threonine 255) interacts with Mg(2+). Lysine 458 provides a ligand contact to (6S)-5-formyl-5,6,7,8-tetrahydrofolate.

The protein belongs to the TRAFAC class TrmE-Era-EngA-EngB-Septin-like GTPase superfamily. TrmE GTPase family. Homodimer. Heterotetramer of two MnmE and two MnmG subunits. K(+) serves as cofactor.

Its subcellular location is the cytoplasm. Functionally, exhibits a very high intrinsic GTPase hydrolysis rate. Involved in the addition of a carboxymethylaminomethyl (cmnm) group at the wobble position (U34) of certain tRNAs, forming tRNA-cmnm(5)s(2)U34. This is tRNA modification GTPase MnmE from Bacillus thuringiensis (strain Al Hakam).